The chain runs to 95 residues: Aspartyl/glutamyl-tRNA(Asn/Gln) amidotransferase subunit C (95 aa).

This sequence belongs to the GatC family. In terms of assembly, heterotrimer of A, B and C subunits.

It carries out the reaction L-glutamyl-tRNA(Gln) + L-glutamine + ATP + H2O = L-glutaminyl-tRNA(Gln) + L-glutamate + ADP + phosphate + H(+). The enzyme catalyses L-aspartyl-tRNA(Asn) + L-glutamine + ATP + H2O = L-asparaginyl-tRNA(Asn) + L-glutamate + ADP + phosphate + 2 H(+). Its function is as follows. Allows the formation of correctly charged Asn-tRNA(Asn) or Gln-tRNA(Gln) through the transamidation of misacylated Asp-tRNA(Asn) or Glu-tRNA(Gln) in organisms which lack either or both of asparaginyl-tRNA or glutaminyl-tRNA synthetases. The reaction takes place in the presence of glutamine and ATP through an activated phospho-Asp-tRNA(Asn) or phospho-Glu-tRNA(Gln). This chain is Aspartyl/glutamyl-tRNA(Asn/Gln) amidotransferase subunit C, found in Pseudomonas entomophila (strain L48).